We begin with the raw amino-acid sequence, 221 residues long: MFSELPPSVPTALLQWGWGLHRGPCSIPNFKQVASQHSVQTDFTENSVDANENFPIGHAGCIEKTKDDYVPFDTLFMVSSIDELGRRQLTDTIRRSLIMNACEITVACTKTAAFSGRGVSRQKHVTLSKNKFNPSSHKSLQMFVLCQKTHAPRVRNLLYESIRARRPRRYYTRSTDGKSRPLVPVFVYEFTALDRVLLHKENTLTDQPINTENSGHGRTRT.

This sequence belongs to the alphaherpesvirinae HHV-1 UL3 family. Post-translationally, phosphorylated.

It is found in the host nucleus. This chain is Nuclear phosphoprotein UL3 homolog, found in Varicella-zoster virus (strain Oka vaccine) (HHV-3).